The chain runs to 336 residues: Atypical chemokine receptor 1 (336 aa).

The Extracellular segment spans residues 1 to 63 (MGNCLHPAEL…CNLLDDSALP (63 aa)). N-linked (GlcNAc...) asparagine glycosylation is found at Asn-16, Asn-27, and Asn-33. Cystine bridges form between Cys-51–Cys-276 and Cys-129–Cys-195. A helical transmembrane segment spans residues 64–84 (FFILVSVLGILASGIVLFMFF). Residues 85 to 95 (RPLFHWQLCPG) are Cytoplasmic-facing. A helical transmembrane segment spans residues 96–116 (WPVLAQLAVGSALFSIVVPIL). Topologically, residues 117 to 129 (APGLGNTRSSALC) are extracellular. The chain crosses the membrane as a helical span at residues 130–153 (SLGYCVWYGSAFAQALLLGCHASL). The Cytoplasmic segment spans residues 154–166 (GPKLGADQVPGLT). A helical membrane pass occupies residues 167 to 187 (LGLSVGLWGVAALLTLPVTLA). The Extracellular segment spans residues 188–207 (SGASGGLCTPVYSMELKALQ). A helical transmembrane segment spans residues 208–228 (ATHAVACLAIFVLLPLGLFGA). Residues 229–244 (KGLKKALGMGPGPWMN) are Cytoplasmic-facing. A helical transmembrane segment spans residues 245–265 (ILWAWFIFWWPHGVVLGLDFL). The Extracellular portion of the chain corresponds to 266-287 (VRSKLLLLSTCLAQQALDLLLN). Residues 288-308 (LAEALAILHCVATPLLLALFC) form a helical membrane-spanning segment. Residues 309–336 (HQATRTLLPSLPLPEGWSSHLDTLGSKS) are Cytoplasmic-facing.

Belongs to the G-protein coupled receptor 1 family. Atypical chemokine receptor subfamily.

It localises to the early endosome. The protein resides in the recycling endosome. It is found in the membrane. Functionally, atypical chemokine receptor that controls chemokine levels and localization via high-affinity chemokine binding that is uncoupled from classic ligand-driven signal transduction cascades, resulting instead in chemokine sequestration, degradation, or transcytosis. Also known as interceptor (internalizing receptor) or chemokine-scavenging receptor or chemokine decoy receptor. Has a promiscuous chemokine-binding profile, interacting with inflammatory chemokines of both the CXC and the CC subfamilies but not with homeostatic chemokines. Acts as a receptor for chemokines including CCL2, CCL5, CCL7, CCL11, CCL13, CCL14, CCL17, CXCL5, CXCL6, IL8/CXCL8, CXCL11, GRO, RANTES, MCP-1 and TARC. May regulate chemokine bioavailability and, consequently, leukocyte recruitment through two distinct mechanisms: when expressed in endothelial cells, it sustains the abluminal to luminal transcytosis of tissue-derived chemokines and their subsequent presentation to circulating leukocytes; when expressed in erythrocytes, serves as blood reservoir of cognate chemokines but also as a chemokine sink, buffering potential surges in plasma chemokine levels. The sequence is that of Atypical chemokine receptor 1 (ACKR1) from Papio hamadryas (Hamadryas baboon).